Here is a 258-residue protein sequence, read N- to C-terminus: Transcription factor RSL3 (258 aa).

Positions 98–105 (RKLLDVEN) match the D-box motif. A disordered region spans residues 119–178 (ELAKSKKKQRVSSESNTVDESNTNWVDGQSLSNSSDDEKASVTSVKGKTRATKGTATDPQ). Residues 130–152 (SSESNTVDESNTNWVDGQSLSNS) are compositionally biased toward polar residues. Residues 173 to 186 (TATDPQSLYARKRR) are basic motif. Residues 173–222 (TATDPQSLYARKRREKINERLKTLQNLVPNGTKVDISTMLEEAVHYVKFL) enclose the bHLH domain. Residues 187-222 (EKINERLKTLQNLVPNGTKVDISTMLEEAVHYVKFL) form a helix-loop-helix motif region.

As to quaternary structure, homodimer. In terms of processing, ubiquitinated. Ubiquitination leads to its subsequent degradation by the 26S proteasome. In terms of tissue distribution, expressed constitutively in roots, leaves, and flowers. Expressed in root epidermal hair cells.

It is found in the nucleus. Transcription factor involved in the regulation of root hair elongation. Is sufficient to promote postmitotic cell growth in root-hair cells and is a direct transcriptional target of RHD6 and RSL1. Involved in the regulation of root hair elongation in response to low phosphate. Controls root hair cell growth by regulating the expression of genes encoding proteins involved in cell signaling, cell wall modification and secretion. The sequence is that of Transcription factor RSL3 from Arabidopsis thaliana (Mouse-ear cress).